Consider the following 469-residue polypeptide: MTRPVRTRFAPSPTGFIHLGNIRSALYPWAFARKMKGTFVLRIEDTDVERSSQEAVDAILEGMQWLGLDFDEGPIYQMQRMDRYRAVLAQMLEQGLAYPCYMSAEELDALRERQRAAGEKPRYDGTWRPEPGKVLPEPPAGVKPVLRFRNPLTGTVVWDDAVKGRVEISNEELDDLVIARPDGTPIYNFCVVVDDMDMNITHVIRGDDHVNNTPRQINILRALGGEPPVYAHLPTVLNEQGEKMSKRHGAMSVMAYRDAGFLPEAVVNYLARLGWSHGDAEIFSREQFVEWFDLEHLGKSPAQYDHSKLSWLNAHYIKEADNARLAALAKPFLDALGIDDAAIATGPALDAVIGLMKDRATTVKEIAEGAAMFYRVPAPDADALAQHVTDAVRPALADLAAALKAADWTKEAVSAALKATLATHKLKMPQLAMPVRLLVAGTTHTPSIDAVLVLFGRDAVVSRIEAALA.

The 'HIGH' region motif lies at 11–21 (PSPTGFIHLGN). The segment covering 118–131 (GEKPRYDGTWRPEP) has biased composition (basic and acidic residues). The interval 118–138 (GEKPRYDGTWRPEPGKVLPEP) is disordered. The short motif at 243 to 247 (KMSKR) is the 'KMSKS' region element. K246 contacts ATP.

This sequence belongs to the class-I aminoacyl-tRNA synthetase family. Glutamate--tRNA ligase type 1 subfamily. In terms of assembly, monomer.

It is found in the cytoplasm. It catalyses the reaction tRNA(Glu) + L-glutamate + ATP = L-glutamyl-tRNA(Glu) + AMP + diphosphate. Catalyzes the attachment of glutamate to tRNA(Glu) in a two-step reaction: glutamate is first activated by ATP to form Glu-AMP and then transferred to the acceptor end of tRNA(Glu). This is Glutamate--tRNA ligase from Burkholderia vietnamiensis (strain G4 / LMG 22486) (Burkholderia cepacia (strain R1808)).